Here is a 204-residue protein sequence, read N- to C-terminus: Leucyl/phenylalanyl-tRNA--protein transferase (204 aa).

This sequence belongs to the L/F-transferase family.

It is found in the cytoplasm. It catalyses the reaction N-terminal L-lysyl-[protein] + L-leucyl-tRNA(Leu) = N-terminal L-leucyl-L-lysyl-[protein] + tRNA(Leu) + H(+). It carries out the reaction N-terminal L-arginyl-[protein] + L-leucyl-tRNA(Leu) = N-terminal L-leucyl-L-arginyl-[protein] + tRNA(Leu) + H(+). The catalysed reaction is L-phenylalanyl-tRNA(Phe) + an N-terminal L-alpha-aminoacyl-[protein] = an N-terminal L-phenylalanyl-L-alpha-aminoacyl-[protein] + tRNA(Phe). Functions in the N-end rule pathway of protein degradation where it conjugates Leu, Phe and, less efficiently, Met from aminoacyl-tRNAs to the N-termini of proteins containing an N-terminal arginine or lysine. The sequence is that of Leucyl/phenylalanyl-tRNA--protein transferase from Rhizobium johnstonii (strain DSM 114642 / LMG 32736 / 3841) (Rhizobium leguminosarum bv. viciae).